A 361-amino-acid chain; its full sequence is Phospho-N-acetylmuramoyl-pentapeptide-transferase (361 aa).

The next 10 helical transmembrane spans lie at 27–47 (ILAS…MIRW), 70–90 (GTPT…CLLW), 97–117 (SLWL…VDDY), 134–154 (YFWQ…NASL), 167–187 (TVTW…IVGS), 199–219 (GLAI…AYAS), 236–256 (TGEL…FLWY), 263–283 (VFMG…VAVV), 288–308 (LVLL…ILQV), and 338–358 (KVIV…LATL).

It belongs to the glycosyltransferase 4 family. MraY subfamily. It depends on Mg(2+) as a cofactor.

Its subcellular location is the cell inner membrane. The enzyme catalyses UDP-N-acetyl-alpha-D-muramoyl-L-alanyl-gamma-D-glutamyl-meso-2,6-diaminopimeloyl-D-alanyl-D-alanine + di-trans,octa-cis-undecaprenyl phosphate = di-trans,octa-cis-undecaprenyl diphospho-N-acetyl-alpha-D-muramoyl-L-alanyl-D-glutamyl-meso-2,6-diaminopimeloyl-D-alanyl-D-alanine + UMP. It participates in cell wall biogenesis; peptidoglycan biosynthesis. Its function is as follows. Catalyzes the initial step of the lipid cycle reactions in the biosynthesis of the cell wall peptidoglycan: transfers peptidoglycan precursor phospho-MurNAc-pentapeptide from UDP-MurNAc-pentapeptide onto the lipid carrier undecaprenyl phosphate, yielding undecaprenyl-pyrophosphoryl-MurNAc-pentapeptide, known as lipid I. This chain is Phospho-N-acetylmuramoyl-pentapeptide-transferase, found in Legionella pneumophila subsp. pneumophila (strain Philadelphia 1 / ATCC 33152 / DSM 7513).